Reading from the N-terminus, the 328-residue chain is MKALVRVAVTGAAGQIGYSLLFRIAAGEMFGKDRPVILQMLELPDEKAQAALKGVMMELEDCAFPLLAGMVVTDNPDIAFKDADAALLVGSRPRGPGMERKDLLMENAKIFTAQGAALNKVARRDVKVLVVGNPANTNAYIAMKSAPDLNPKHFTAMLRLDHNRALSQLSTKLGKPVANIEKLIVWGNHSPTMYPDYRFATADGTPIIEAINDQAWNANSFIPTVSKRGAAIIEARGLSSAASAANAAIDHMRDWLLGSNGKWITMGVPSDGSYGIPEGMIFGFPVTTTNGEYSIVKDLPIDTFSKTYIDKTLAELEEERASITHLLR.

11–17 (GAAGQIG) contacts NAD(+). Arg94 and Arg100 together coordinate substrate. Residues Asn107, Gln114, and 131-133 (VGN) each bind NAD(+). Asn133 and Arg164 together coordinate substrate. The active-site Proton acceptor is the His189.

Belongs to the LDH/MDH superfamily. MDH type 2 family.

It carries out the reaction (S)-malate + NAD(+) = oxaloacetate + NADH + H(+). Functionally, catalyzes the reversible oxidation of malate to oxaloacetate. This Xylella fastidiosa (strain Temecula1 / ATCC 700964) protein is Malate dehydrogenase.